The primary structure comprises 211 residues: GTP-binding protein ypt5 (211 aa).

GTP is bound at residue 21-28 (GDSAVGKS). Positions 43 to 51 (RESTIGAAF) match the Effector region motif. Residues 70 to 74 (DTAGQ) and 128 to 131 (NKLD) contribute to the GTP site. Residues Cys209 and Cys211 are each lipidated (S-geranylgeranyl cysteine). At Cys211 the chain carries Cysteine methyl ester.

It belongs to the small GTPase superfamily. Rab family.

It localises to the cell membrane. Protein transport. Probably involved in vesicular traffic. The sequence is that of GTP-binding protein ypt5 (ypt5) from Schizosaccharomyces pombe (strain 972 / ATCC 24843) (Fission yeast).